The chain runs to 910 residues: DNA repair and recombination protein RAD54B (910 aa).

Over residues 1-14 (MRRSAAPSQLQGNS) the composition is skewed to polar residues. A disordered region spans residues 1-33 (MRRSAAPSQLQGNSFKKPKFIPPGRSNPGLNEE). Ser-14 carries the post-translational modification Phosphoserine. The region spanning 313–480 (GMRMNGRCGA…FALIDFVNPG (168 aa)) is the Helicase ATP-binding domain. Position 326–333 (326–333 (DEMGLGKT)) interacts with ATP. Residues 431–434 (DEGH) carry the DEGH box motif. One can recognise a Helicase C-terminal domain in the interval 649-810 (KLLAVIHELR…HIQFSVEELK (162 aa)).

Belongs to the SNF2/RAD54 helicase family. In terms of assembly, interacts with RAD51 through the NH2-terminal domain. Immunoprecipitation experiments show that the interaction is constitutive and not induced by ionizing radiation. The interaction may be indirect. In terms of tissue distribution, abundantly expressed in testis and spleen. Relatively low levels observed in thymus, prostate, ovary and colon.

It is found in the nucleus. Functionally, involved in DNA repair and mitotic recombination. May play an active role in recombination processes in concert with other members of the RAD52 epistasis group. The polypeptide is DNA repair and recombination protein RAD54B (RAD54B) (Homo sapiens (Human)).